The chain runs to 143 residues: Small ribosomal subunit protein uS12 (143 aa).

The segment covering 1-19 has biased composition (basic residues); that stretch reads MGKPKGIRAARKLKTHRQA. Positions 1-21 are disordered; that stretch reads MGKPKGIRAARKLKTHRQAQR. Position 62 is a hydroxyproline (Pro-62).

Belongs to the universal ribosomal protein uS12 family. As to quaternary structure, component of the 40S small ribosomal subunit.

The protein resides in the cytoplasm. It is found in the cytosol. It localises to the rough endoplasmic reticulum. This is Small ribosomal subunit protein uS12 (rps-23) from Brugia malayi (Filarial nematode worm).